We begin with the raw amino-acid sequence, 745 residues long: Exocyst complex component 3 (745 aa).

The residue at position 28 (lysine 28) is an N6-acetyllysine.

It belongs to the SEC6 family. The exocyst complex is composed of EXOC1, EXOC2, EXOC3, EXOC4, EXOC5, EXOC6, EXOC7 and EXOC8. Interacts with EXOC3L1. Interacts with BIRC6/bruce. Interacts with MYRIP. Interacts with SLC6A9.

It localises to the cytoplasm. The protein resides in the perinuclear region. Its subcellular location is the cell projection. The protein localises to the growth cone. It is found in the neuron projection. It localises to the midbody. The protein resides in the golgi apparatus. Functionally, component of the exocyst complex involved in the docking of exocytic vesicles with fusion sites on the plasma membrane. The chain is Exocyst complex component 3 (EXOC3) from Bos taurus (Bovine).